Reading from the N-terminus, the 197-residue chain is ATP-dependent Clp protease proteolytic subunit (197 aa).

Ser-97 serves as the catalytic Nucleophile. His-122 is an active-site residue.

It belongs to the peptidase S14 family. In terms of assembly, fourteen ClpP subunits assemble into 2 heptameric rings which stack back to back to give a disk-like structure with a central cavity, resembling the structure of eukaryotic proteasomes.

The protein resides in the cytoplasm. The enzyme catalyses Hydrolysis of proteins to small peptides in the presence of ATP and magnesium. alpha-casein is the usual test substrate. In the absence of ATP, only oligopeptides shorter than five residues are hydrolyzed (such as succinyl-Leu-Tyr-|-NHMec, and Leu-Tyr-Leu-|-Tyr-Trp, in which cleavage of the -Tyr-|-Leu- and -Tyr-|-Trp bonds also occurs).. Its function is as follows. Cleaves peptides in various proteins in a process that requires ATP hydrolysis. Has a chymotrypsin-like activity. Plays a major role in the degradation of misfolded proteins. This chain is ATP-dependent Clp protease proteolytic subunit, found in Trichlorobacter lovleyi (strain ATCC BAA-1151 / DSM 17278 / SZ) (Geobacter lovleyi).